We begin with the raw amino-acid sequence, 332 residues long: F-box/SPRY domain-containing protein 1 (332 aa).

Residues 1 to 82 (MAENDGETIV…RSPRRPEVSA (82 aa)) are disordered. 2 stretches are compositionally biased toward polar residues: residues 15 to 28 (CNLT…SSGL) and 49 to 64 (NPSS…QLTP). Residues 79–127 (EVSASRLPLKVLNQIFQYLPLKDLRSAMLTCHSWNNALSMEDSDIWQYL) form the F-box domain. In terms of domain architecture, B30.2/SPRY spans 138-330 (SDPFLLAELG…VTMVYVGSPQ (193 aa)).

Belongs to the FBXO45/Fsn family. As to quaternary structure, component of an SCF (SKP1-CUL1-F-box protein) E3 ubiquitin ligase complex composed of cul-1, fsn-1, rpm-1 and skr-1. Interacts (via SPRY domain) with scd-2 (via cytoplasmic domain). Interacts (via SPRY domain) with convertase egl-3 (via C-terminus). Expressed in GABAergic neuromuscular junctions (NMJs).

It localises to the synapse. Its pathway is protein modification; protein ubiquitination. Functionally, component of a SCF (SKP1-CUL1-F-box protein) E3 ubiquitin ligase complex which is required for the restriction and/or maturation of synapses in GABAergic neuromuscular junction (NMJ) presynaptic neurons. Promotes NRJ synapse development and synaptic transmission by negatively regulating the daf-2/InsR pathway in muscles. By targeting convertase egl-3 for degradation, negatively modulates insulin-like protein ins-4 and ins-6 processing. May stabilize synapse formation by promoting the down-regulation of scd-2. Regulates axon termination in PLM and ALM neurons. In Caenorhabditis elegans, this protein is F-box/SPRY domain-containing protein 1 (fsn-1).